The following is a 246-amino-acid chain: Ribonuclease 3 (246 aa).

Positions 30-152 (ISWIEKNLGH…MIGAIFLESG (123 aa)) constitute an RNase III domain. Residue Glu65 participates in Mg(2+) binding. The active site involves Asp69. Asp138 and Glu141 together coordinate Mg(2+). Glu141 is a catalytic residue. A DRBM domain is found at 177–246 (HPKSALQEWA…AQALLDILAQ (70 aa)).

This sequence belongs to the ribonuclease III family. In terms of assembly, homodimer. It depends on Mg(2+) as a cofactor.

The protein localises to the cytoplasm. The catalysed reaction is Endonucleolytic cleavage to 5'-phosphomonoester.. In terms of biological role, digests double-stranded RNA. Involved in the processing of primary rRNA transcript to yield the immediate precursors to the large and small rRNAs (23S and 16S). Processes some mRNAs, and tRNAs when they are encoded in the rRNA operon. Processes pre-crRNA and tracrRNA of type II CRISPR loci if present in the organism. In Zymomonas mobilis subsp. mobilis (strain ATCC 31821 / ZM4 / CP4), this protein is Ribonuclease 3.